The sequence spans 701 residues: Translation initiation factor IF-2 (701 aa).

Over residues 48–62 (KIYKPEKAEQSEKSQ) the composition is skewed to basic and acidic residues. Residues 48–123 (KIYKPEKAEQ…EPKEMPSKIT (76 aa)) form a disordered region. 2 stretches are compositionally biased toward low complexity: residues 63-89 (QKNTQNKQQTTHNKGNQSNKGNQNNKP) and 97-109 (NNKNNKNNKNNKQ). Positions 110–119 (PKQEEPKEMP) are enriched in basic and acidic residues. Residues 203-372 (ERPAVVTIMG…VLTSEVQELK (170 aa)) enclose the tr-type G domain. Positions 212 to 219 (GHVDHGKT) are G1. A GTP-binding site is contributed by 212–219 (GHVDHGKT). The G2 stretch occupies residues 237-241 (GITQH). The G3 stretch occupies residues 258–261 (DTPG). Residues 258-262 (DTPGH) and 312-315 (NKID) each bind GTP. The G4 stretch occupies residues 312–315 (NKID). Residues 348–350 (SAL) form a G5 region.

The protein belongs to the TRAFAC class translation factor GTPase superfamily. Classic translation factor GTPase family. IF-2 subfamily.

The protein resides in the cytoplasm. One of the essential components for the initiation of protein synthesis. Protects formylmethionyl-tRNA from spontaneous hydrolysis and promotes its binding to the 30S ribosomal subunits. Also involved in the hydrolysis of GTP during the formation of the 70S ribosomal complex. This is Translation initiation factor IF-2 from Staphylococcus saprophyticus subsp. saprophyticus (strain ATCC 15305 / DSM 20229 / NCIMB 8711 / NCTC 7292 / S-41).